Consider the following 424-residue polypeptide: MTHALFSPFTIAGISHHTASVADMESVRFPDEEAFLTRAGDWFKGVILLQTCNRIEIMVHGNADLLGTFLESEGRAGWQMWKDADALSHLLDLAAGLDSMVIGEDQILGQLRKSLSLSESMSVADPLITLCINKAIHAGSEARRISGINRGAVSIGSAAVLLAEEQLGSLAGRHILVLGTGEMGVLVTQALAAKQLSAIYVANRTFDRAQCLAEKVHGTAVPMADLYRYLTMSDVIICCTAAPHPVIKVQEVMEALKGRSWPLDHSRRPLIIVDIAQPRDVEEDVGKIPGVCLYTIDDLRKVNDDTAQFRKEAAEKVREFLDQELVQFIRLFNRKAADELLATLHSWAEQIRIRERDRALSRLSGCDDRVRDVTDDLTRVLTRKLLTDVTLTIRTCAERGEMKIAEDLVGAITRGENICSRTYD.

Residues 51–54 (TCNR), Ser-99, 104–106 (EDQ), and Gln-110 contribute to the substrate site. Cys-52 (nucleophile) is an active-site residue. An NADP(+)-binding site is contributed by 179–184 (GTGEMG).

This sequence belongs to the glutamyl-tRNA reductase family. As to quaternary structure, homodimer.

The enzyme catalyses (S)-4-amino-5-oxopentanoate + tRNA(Glu) + NADP(+) = L-glutamyl-tRNA(Glu) + NADPH + H(+). It participates in porphyrin-containing compound metabolism; protoporphyrin-IX biosynthesis; 5-aminolevulinate from L-glutamyl-tRNA(Glu): step 1/2. In terms of biological role, catalyzes the NADPH-dependent reduction of glutamyl-tRNA(Glu) to glutamate 1-semialdehyde (GSA). The polypeptide is Glutamyl-tRNA reductase (Methanospirillum hungatei JF-1 (strain ATCC 27890 / DSM 864 / NBRC 100397 / JF-1)).